A 169-amino-acid polypeptide reads, in one-letter code: Succinate dehydrogenase cytochrome b560 subunit, mitochondrial (169 aa).

The transit peptide at Met1 to Pro29 directs the protein to the mitochondrion. At Leu30–Met65 the chain is on the mitochondrial matrix side. The helical transmembrane segment at Ala66–Leu90 threads the bilayer. At Leu91–Pro110 the chain is on the mitochondrial intermembrane side. A helical transmembrane segment spans residues Ala111–Leu139. His127 contacts heme b. The Mitochondrial matrix segment spans residues Gly140–Pro146. A helical membrane pass occupies residues Gln147–Ala167. The Mitochondrial intermembrane segment spans residues Ala168–Met169.

The protein belongs to the cytochrome b560 family. In terms of assembly, component of complex II composed of four subunits: the flavoprotein (FP) SDHA, iron-sulfur protein (IP) SDHB, and a cytochrome b560 composed of SDHC and SDHD. Requires heme b as cofactor.

Its subcellular location is the mitochondrion inner membrane. The protein operates within carbohydrate metabolism; tricarboxylic acid cycle. Membrane-anchoring subunit of succinate dehydrogenase (SDH) that is involved in complex II of the mitochondrial electron transport chain and is responsible for transferring electrons from succinate to ubiquinone (coenzyme Q). SDH also oxidizes malate to the non-canonical enol form of oxaloacetate, enol-oxaloacetate. Enol-oxaloacetate, which is a potent inhibitor of the succinate dehydrogenase activity, is further isomerized into keto-oxaloacetate. In Homo sapiens (Human), this protein is Succinate dehydrogenase cytochrome b560 subunit, mitochondrial (SDHC).